Consider the following 1332-residue polypeptide: MTADELVFFVNGKKVVEKNADPETTLLAYLRRKLGLRGTKLGCGEGGCGACTVMLSKYDRLQDKIIHFSANACLAPICTLHHVAVTTVEGIGSTKTRLHPVQERIAKSHGSQCGFCTPGIVMSMYTLLRNQPEPTVEEIEDAFQGNLCRCTGYRPILQGFRTFAKNGGCCGGNGNNPNCCMNQKKDHTVTLSPSLFNPEEFMPLDPTQEPIFPPELLRLKDVPPKQLRFEGERVTWIQASTLKELLDLKAQHPEAKLVVGNTEIGIEMKFKNQLFPMIICPAWIPELNAVEHGPEGISFGAACALSSVEKTLLEAVAKLPTQKTEVFRGVLEQLRWFAGKQVKSVASLGGNIITASPISDLNPVFMASGTKLTIVSRGTRRTVPMDHTFFPSYRKTLLGPEEILLSIEIPYSREDEFFSAFKQASRREDDIAKVTCGMRVLFQPGSMQVKELALCYGGMADRTISALKTTQKQLSKFWNEKLLQDVCAGLAEELSLSPDAPGGMIEFRRTLTLSFFFKFYLTVLKKLGKDSKDKCGKLDPTYTSATLLFQKDPPANIQLFQEVPNGQSKEDTVGRPLPHLAAAMQASGEAVYCDDIPRYENELFLRLVTSTRAHAKIKSIDVSEAQKVPGFVCFLSADDIPGSNETGLFNDETVFAKDTVTCVGHIIGAVVADTPEHAERAAHVVKVTYEDLPAIITIEDAIKNNSFYGSELKIEKGDLKKGFSEADNVVSGELYIGGQDHFYLETHCTIAIPKGEEGEMELFVSTQNAMKTQSFVAKMLGVPVNRILVRVKRMGGGFGGKETRSTLVSVAVALAAYKTGHPVRCMLDRNEDMLITGGRHPFLARYKVGFMKTGTIVALEVDHYSNAGNSRDLSHSIMERALFHMDNCYKIPNIRGTGRLCKTNLSSNTAFRGFGGPQALFIAENWMSEVAVTCGLPAEEVRWKNMYKEGDLTHFNQRLEGFSVPRCWDECLKSSQYYARKSEVDKFNKENCWKKRGLCIIPTKFGISFTVPFLNQAGALIHVYTDGSVLVSHGGTEMGQGLHTKMVQVASKALKIPISKIYISETSTNTVPNSSPTAASVSTDIYGQAVYEACQTILKRLEPFKKKNPDGSWEDWVMAAYQDRVSLSTTGFYRTPNLGYSFETNSGNAFHYFTYGVACSEVEIDCLTGDHKNLRTDIVMDVGSSLNPAIDIGQVEGAFVQGLGLFTLEELHYSPEGSLHTRGPSTYKIPAFGSIPTEFRVSLLRDCPNKKAIYASKAVGEPPLFLGASVFFAIKDAIRAARAQHTNNNTKELFRLDSPATPEKIRNACVDKFTTLCVTGAPGNCKPWSLRV.

Positions 4–91 (DELVFFVNGK…HVAVTTVEGI (88 aa)) constitute a 2Fe-2S ferredoxin-type domain. [2Fe-2S] cluster contacts are provided by cysteine 43, cysteine 48, cysteine 51, cysteine 73, cysteine 113, cysteine 116, cysteine 148, and cysteine 150. Positions 229-414 (FEGERVTWIQ…LSIEIPYSRE (186 aa)) constitute an FAD-binding PCMH-type domain. Residues 257 to 264 (LVVGNTEI), phenylalanine 337, 347 to 351 (SLGGN), aspartate 360, leucine 404, and lysine 422 contribute to the FAD site. Cysteine 535 and cysteine 992 are disulfide-bonded. 2 residues coordinate Mo-molybdopterin: glutamine 767 and phenylalanine 798. Residues glutamate 802 and arginine 880 each coordinate substrate. Mo-molybdopterin is bound at residue arginine 912. Positions 914 and 1010 each coordinate substrate. Alanine 1079 contacts Mo-molybdopterin. The active-site Proton acceptor is the glutamate 1261.

It belongs to the xanthine dehydrogenase family. In terms of assembly, homodimer. Interacts with BTN1A1. The cofactor is [2Fe-2S] cluster. It depends on FAD as a cofactor. Mo-molybdopterin serves as cofactor. Post-translationally, subject to partial proteolysis; this alters the enzyme from the dehydrogenase form (D) to the oxidase form (O). Contains sulfhydryl groups that are easily oxidized (in vitro); this alters the enzyme from the dehydrogenase form (D) to the oxidase form (O). In terms of tissue distribution, detected in milk (at protein level).

It localises to the cytoplasm. The protein resides in the peroxisome. Its subcellular location is the secreted. It carries out the reaction xanthine + NAD(+) + H2O = urate + NADH + H(+). It catalyses the reaction hypoxanthine + NAD(+) + H2O = xanthine + NADH + H(+). The catalysed reaction is xanthine + O2 + H2O = urate + H2O2. Can be converted from the dehydrogenase form (D) to the oxidase form (O) irreversibly by proteolysis or reversibly through the oxidation of sulfhydryl groups. In terms of biological role, key enzyme in purine degradation. Catalyzes the oxidation of hypoxanthine to xanthine. Catalyzes the oxidation of xanthine to uric acid. Contributes to the generation of reactive oxygen species. In Bos taurus (Bovine), this protein is Xanthine dehydrogenase/oxidase (XDH).